The chain runs to 95 residues: MSDDGGGRKNLRMPEDDEVFAEVTDMLGANRVQVRCADGEERTARIPGRMQKRIWIREDDIVLVEPWDWQDDKADVTWRYEKSDADQLREEGHIE.

An S1-like domain is found at G7–E81.

The protein belongs to the eIF-1A family.

Seems to be required for maximal rate of protein biosynthesis. Enhances ribosome dissociation into subunits and stabilizes the binding of the initiator Met-tRNA(I) to 40 S ribosomal subunits. In Halobacterium salinarum (strain ATCC 29341 / DSM 671 / R1), this protein is Translation initiation factor 1A (eIF1A).